The sequence spans 249 residues: ATP synthase subunit a (249 aa).

Helical transmembrane passes span 26–46, 84–104, 114–134, 143–163, 185–205, and 208–228; these read FTNS…FLYL, FFPF…LGLF, IVVT…YGFW, LFVP…IEVI, ITLK…VAGA, and AVLP…VAFL.

It belongs to the ATPase A chain family. As to quaternary structure, F-type ATPases have 2 components, CF(1) - the catalytic core - and CF(0) - the membrane proton channel. CF(1) has five subunits: alpha(3), beta(3), gamma(1), delta(1), epsilon(1). CF(0) has three main subunits: a(1), b(2) and c(9-12). The alpha and beta chains form an alternating ring which encloses part of the gamma chain. CF(1) is attached to CF(0) by a central stalk formed by the gamma and epsilon chains, while a peripheral stalk is formed by the delta and b chains.

The protein localises to the cell inner membrane. Key component of the proton channel; it plays a direct role in the translocation of protons across the membrane. The protein is ATP synthase subunit a of Chelativorans sp. (strain BNC1).